We begin with the raw amino-acid sequence, 457 residues long: Glutamate--tRNA ligase 2 (457 aa).

Residues 9–19 carry the 'HIGH' region motif; it reads PSPTGYIHIGN. The 'KMSKS' region signature appears at 250–254; it reads GLSKR. Residue lysine 253 participates in ATP binding.

This sequence belongs to the class-I aminoacyl-tRNA synthetase family. Glutamate--tRNA ligase type 1 subfamily. Monomer.

The protein resides in the cytoplasm. The enzyme catalyses tRNA(Glu) + L-glutamate + ATP = L-glutamyl-tRNA(Glu) + AMP + diphosphate. Its function is as follows. Catalyzes the attachment of glutamate to tRNA(Glu) in a two-step reaction: glutamate is first activated by ATP to form Glu-AMP and then transferred to the acceptor end of tRNA(Glu). The protein is Glutamate--tRNA ligase 2 of Brucella melitensis biotype 1 (strain ATCC 23456 / CCUG 17765 / NCTC 10094 / 16M).